Consider the following 455-residue polypeptide: Kynureninase (455 aa).

Residues Leu-94, Thr-95, 122–125 (FPSD), Asp-208, His-211, and Tyr-233 contribute to the pyridoxal 5'-phosphate site. Residue Lys-234 is modified to N6-(pyridoxal phosphate)lysine. Pyridoxal 5'-phosphate contacts are provided by Trp-275 and Asn-303.

Belongs to the kynureninase family. As to quaternary structure, homodimer. It depends on pyridoxal 5'-phosphate as a cofactor.

It is found in the cytoplasm. The enzyme catalyses L-kynurenine + H2O = anthranilate + L-alanine + H(+). It catalyses the reaction 3-hydroxy-L-kynurenine + H2O = 3-hydroxyanthranilate + L-alanine + H(+). It functions in the pathway amino-acid degradation; L-kynurenine degradation; L-alanine and anthranilate from L-kynurenine: step 1/1. The protein operates within cofactor biosynthesis; NAD(+) biosynthesis; quinolinate from L-kynurenine: step 2/3. Catalyzes the cleavage of L-kynurenine (L-Kyn) and L-3-hydroxykynurenine (L-3OHKyn) into anthranilic acid (AA) and 3-hydroxyanthranilic acid (3-OHAA), respectively. The sequence is that of Kynureninase from Vanderwaltozyma polyspora (strain ATCC 22028 / DSM 70294 / BCRC 21397 / CBS 2163 / NBRC 10782 / NRRL Y-8283 / UCD 57-17) (Kluyveromyces polysporus).